Reading from the N-terminus, the 538-residue chain is Phosphoenolpyruvate carboxykinase (ATP) (538 aa).

Position 64 (Arg-64) interacts with substrate. Residue Arg-152 coordinates ATP. Residues Tyr-205 and Lys-211 each contribute to the substrate site. ATP is bound by residues Lys-211, His-230, and 246-254 (GLSGTGKTT). 2 residues coordinate Mn(2+): Lys-211 and His-230. Asp-267 contacts Mn(2+). ATP is bound by residues Glu-295, Arg-331, Arg-344, 447–448 (RI), and Thr-453. Residue Arg-331 coordinates substrate.

This sequence belongs to the phosphoenolpyruvate carboxykinase (ATP) family. As to quaternary structure, monomer. Mn(2+) is required as a cofactor.

It is found in the cytoplasm. The catalysed reaction is oxaloacetate + ATP = phosphoenolpyruvate + ADP + CO2. It functions in the pathway carbohydrate biosynthesis; gluconeogenesis. Its function is as follows. Involved in gluconeogenesis. Catalyzes the conversion of oxaloacetate (OAA) to phosphoenolpyruvate (PEP) through direct phosphoryl transfer between the nucleoside triphosphate and OAA. The sequence is that of Phosphoenolpyruvate carboxykinase (ATP) from Actinobacillus succinogenes (strain ATCC 55618 / DSM 22257 / CCUG 43843 / 130Z).